A 257-amino-acid chain; its full sequence is Pyrroline-5-carboxylate reductase (257 aa).

It belongs to the pyrroline-5-carboxylate reductase family.

It is found in the cytoplasm. It catalyses the reaction L-proline + NADP(+) = (S)-1-pyrroline-5-carboxylate + NADPH + 2 H(+). The catalysed reaction is L-proline + NAD(+) = (S)-1-pyrroline-5-carboxylate + NADH + 2 H(+). The protein operates within amino-acid biosynthesis; L-proline biosynthesis; L-proline from L-glutamate 5-semialdehyde: step 1/1. In terms of biological role, catalyzes the reduction of 1-pyrroline-5-carboxylate (PCA) to L-proline. This chain is Pyrroline-5-carboxylate reductase, found in Helicobacter pylori (strain ATCC 700392 / 26695) (Campylobacter pylori).